The primary structure comprises 154 residues: Ubiquitin-conjugating enzyme E2 L3 (154 aa).

In terms of domain architecture, UBC core spans 2–149 (AASRRLMKEL…AEEFTKKYGE (148 aa)). Cys86 functions as the Glycyl thioester intermediate in the catalytic mechanism. N6-acetyllysine is present on Lys131.

The protein belongs to the ubiquitin-conjugating enzyme family. Interacts with PRKN; involved in ubiquitination and degradation of misfolded proteins. Interacts with UBE3A. Interacts with CCNB1IP1, CBL, ZAP70, RNF19A, RNF19B and RNF144B. Interacts with ARIH1. Interacts with ARIH2 (via RING-type 1). Interacts with NCOA1; they functionally interact to regulate progesterone receptor transcriptional activity. Interacts with NDFIP1 (via N-terminus); the interaction mediates recruitment of UBE2L3 to ITCH and causes MAP3K7 ubiquitination. Post-translationally, ubiquitinated. The alteration of UBE2L3 protein levels during the S-phase of the cell cycle is due to ubiquitin-dependent proteasomal degradation. Autoubiquitinated in vitro.

It localises to the nucleus. It is found in the cytoplasm. It catalyses the reaction S-ubiquitinyl-[E1 ubiquitin-activating enzyme]-L-cysteine + [E2 ubiquitin-conjugating enzyme]-L-cysteine = [E1 ubiquitin-activating enzyme]-L-cysteine + S-ubiquitinyl-[E2 ubiquitin-conjugating enzyme]-L-cysteine.. The protein operates within protein modification; protein ubiquitination. Its function is as follows. Ubiquitin-conjugating enzyme E2 that specifically acts with HECT-type and RBR family E3 ubiquitin-protein ligases. Does not function with most RING-containing E3 ubiquitin-protein ligases because it lacks intrinsic E3-independent reactivity with lysine: in contrast, it has activity with the RBR family E3 enzymes, such as PRKN, RNF31 and ARIH1, that function like RING-HECT hybrids. Accepts ubiquitin from the E1 complex and catalyzes its covalent attachment to other proteins. Mediates ubiquitination by the CUL9-RBX1 complex. In vitro catalyzes 'Lys-11'-linked polyubiquitination. Involved in the selective degradation of short-lived and abnormal proteins. Down-regulated during the S-phase it is involved in progression through the cell cycle. Regulates nuclear hormone receptors transcriptional activity. May play a role in myelopoiesis. This Pongo abelii (Sumatran orangutan) protein is Ubiquitin-conjugating enzyme E2 L3 (UBE2L3).